Here is a 751-residue protein sequence, read N- to C-terminus: Photosystem I P700 chlorophyll a apoprotein A1 (751 aa).

The next 8 helical transmembrane spans lie at Val73–Ala96, Leu159–His182, Leu198–Leu222, Thr294–Tyr312, Trp349–Tyr372, Leu388–Val414, Ala436–His458, and Phe533–Leu551. Residues Cys575 and Cys584 each contribute to the [4Fe-4S] cluster site. 2 helical membrane-spanning segments follow: residues His591–Trp612 and Leu665–Phe687. His676 is a chlorophyll a' binding site. Chlorophyll a-binding residues include Met684 and Tyr692. Trp693 is a binding site for phylloquinone. A helical transmembrane segment spans residues Ala725–Ala745.

Belongs to the PsaA/PsaB family. As to quaternary structure, the PsaA/B heterodimer binds the P700 chlorophyll special pair and subsequent electron acceptors. PSI consists of a core antenna complex that captures photons, and an electron transfer chain that converts photonic excitation into a charge separation. The eukaryotic PSI reaction center is composed of at least 11 subunits. It depends on P700 is a chlorophyll a/chlorophyll a' dimer, A0 is one or more chlorophyll a, A1 is one or both phylloquinones and FX is a shared 4Fe-4S iron-sulfur center. as a cofactor.

It is found in the plastid. The protein resides in the chloroplast thylakoid membrane. The enzyme catalyses reduced [plastocyanin] + hnu + oxidized [2Fe-2S]-[ferredoxin] = oxidized [plastocyanin] + reduced [2Fe-2S]-[ferredoxin]. In terms of biological role, psaA and PsaB bind P700, the primary electron donor of photosystem I (PSI), as well as the electron acceptors A0, A1 and FX. PSI is a plastocyanin/cytochrome c6-ferredoxin oxidoreductase, converting photonic excitation into a charge separation, which transfers an electron from the donor P700 chlorophyll pair to the spectroscopically characterized acceptors A0, A1, FX, FA and FB in turn. Oxidized P700 is reduced on the lumenal side of the thylakoid membrane by plastocyanin or cytochrome c6. The polypeptide is Photosystem I P700 chlorophyll a apoprotein A1 (Tetradesmus obliquus (Green alga)).